A 160-amino-acid chain; its full sequence is Thebaine synthase 2 (160 aa).

Position 74 (Ser-74) interacts with thebaine. His-89 functions as the Proton acceptor in the catalytic mechanism. Thebaine is bound at residue Thr-105.

Belongs to the MLP family. Homodimer (allosteric) and oligomers. Expressed in poppy latex.

It catalyses the reaction (7S)-O-acetylsalutaridinol = thebaine + acetate + H(+). The protein operates within alkaloid biosynthesis; morphine biosynthesis. Slightly inhibited by salutaridine and (7S)-salutaridinol. Functionally, catalyzes the formation of thebaine from (7S)-salutaridinol 7-O-acetate at the expense of labile hydroxylated by-products, which are preferentially produced by spontaneous allylic elimination. No visible activity toward (7S)-salutaridinol (at pH 7). The protein is Thebaine synthase 2 of Papaver somniferum (Opium poppy).